Here is a 75-residue protein sequence, read N- to C-terminus: Small ribosomal subunit protein bS18 (75 aa).

Basic residues predominate over residues 1–11 (MAAKPFFRRRK). The disordered stretch occupies residues 1 to 21 (MAAKPFFRRRKTDPFEGENAP).

It belongs to the bacterial ribosomal protein bS18 family. As to quaternary structure, part of the 30S ribosomal subunit. Forms a tight heterodimer with protein bS6.

Binds as a heterodimer with protein bS6 to the central domain of the 16S rRNA, where it helps stabilize the platform of the 30S subunit. The chain is Small ribosomal subunit protein bS18 from Jannaschia sp. (strain CCS1).